A 134-amino-acid polypeptide reads, in one-letter code: Holo-[acyl-carrier-protein] synthase (134 aa).

2 residues coordinate Mg(2+): D8 and E58.

Belongs to the P-Pant transferase superfamily. AcpS family. Mg(2+) serves as cofactor.

The protein localises to the cytoplasm. It catalyses the reaction apo-[ACP] + CoA = holo-[ACP] + adenosine 3',5'-bisphosphate + H(+). Functionally, transfers the 4'-phosphopantetheine moiety from coenzyme A to a Ser of acyl-carrier-protein. The protein is Holo-[acyl-carrier-protein] synthase of Acidiphilium cryptum (strain JF-5).